The chain runs to 973 residues: Sodium/calcium exchanger 1 (973 aa).

Positions 1–35 (MYNMRRLSLSPTFSMGFHLLVTVSLLFSHVDHVIA) are cleaved as a signal peptide. Over 36–74 (ETEMEGEGNETGECTGSYYCKKGVILPIWEPQDPSFGDK) the chain is Extracellular. N-linked (GlcNAc...) asparagine glycosylation occurs at Asn44. A helical transmembrane segment spans residues 75–95 (IARATVYFVAMVYMFLGVSII). At 96–136 (ADRFMSSIEVITSQEKEITIKKPNGETTKTTVRIWNETVSN) the chain is on the cytoplasmic side. Residues 137–157 (LTLMALGSSAPEILLSVIEVC) form a helical membrane-spanning segment. One copy of the Alpha-1 repeat lies at 141 to 181 (ALGSSAPEILLSVIEVCGHNFTAGDLGPSTIVGSAAFNMFI). Residues 158-170 (GHNFTAGDLGPST) are Extracellular-facing. N-linked (GlcNAc...) asparagine glycosylation is present at Asn160. The helical transmembrane segment at 171-191 (IVGSAAFNMFIIIALCVYVVP) threads the bilayer. Topologically, residues 192–204 (DGETRKIKHLRVF) are cytoplasmic. The chain crosses the membrane as a helical span at residues 205-225 (FVTAAWSIFAYTWLYIILSVI). Topologically, residues 226-231 (SPGVVE) are extracellular. A helical transmembrane segment spans residues 232–252 (VWEGLLTFFFFPICVVFAWVA). Over 253 to 800 (DRRLLFYKYV…FVPPTEYWNG (548 aa)) the chain is Cytoplasmic. The segment at 254–273 (RRLLFYKYVYKRYRAGKQRG) is putative calmodulin-binding region. Phosphoserine is present on residues Ser285 and Ser392. 2 Calx-beta domains span residues 396-496 (VNTE…VHLS) and 527-627 (ATVT…LEIG). Ca(2+) contacts are provided by Glu420, Asp456, Asp481, Asp482, Ile484, Glu486, Glu489, Asp533, Asp534, Asp535, Glu551, Asp587, Asp613, Glu614, Glu615, and Glu718. The helical transmembrane segment at 801-821 (WACFIVSILMIGLLTAFIGDL) threads the bilayer. Residues 822–824 (ASH) are Extracellular-facing. The helical transmembrane segment at 825–845 (FGCTIGLKDSVTAVVFVALGT) threads the bilayer. An Alpha-2 repeat occupies 842 to 878 (ALGTSVPDTFASKVAATQDQYADASIGNVTGSNAVNV). Residues 846–874 (SVPDTFASKVAATQDQYADASIGNVTGSN) lie on the Cytoplasmic side of the membrane. The helical transmembrane segment at 875-895 (AVNVFLGIGVAWSIAAIYHAA) threads the bilayer. The Extracellular portion of the chain corresponds to 896-906 (NGEQFKVSPGT). Residues 907–927 (LAFSVTLFTIFAFINVGVLLY) form a helical membrane-spanning segment. Over 928-944 (RRRPEIGGELGGPRTAK) the chain is Cytoplasmic. A helical transmembrane segment spans residues 945 to 965 (LLTSCLFVLLWLLYIFFSSLE). Topologically, residues 966 to 973 (AYCHIKGF) are extracellular.

The protein belongs to the Ca(2+):cation antiporter (CaCA) (TC 2.A.19) family. SLC8 subfamily. In terms of tissue distribution, detected primarily in heart and at lower levels in brain. Expressed in cardiac sarcolemma, brain, kidney, liver, pancreas, skeletal muscle, placenta and lung.

The protein localises to the cell membrane. It catalyses the reaction Ca(2+)(in) + 3 Na(+)(out) = Ca(2+)(out) + 3 Na(+)(in). Its activity is regulated as follows. Activated by micromolar levels of Ca(2+). Functionally, mediates the exchange of one Ca(2+) ion against three to four Na(+) ions across the cell membrane, and thereby contributes to the regulation of cytoplasmic Ca(2+) levels and Ca(2+)-dependent cellular processes. Contributes to Ca(2+) transport during excitation-contraction coupling in muscle. In a first phase, voltage-gated channels mediate the rapid increase of cytoplasmic Ca(2+) levels due to release of Ca(2+) stores from the endoplasmic reticulum. SLC8A1 mediates the export of Ca(2+) from the cell during the next phase, so that cytoplasmic Ca(2+) levels rapidly return to baseline. Required for normal embryonic heart development and the onset of heart contractions. The protein is Sodium/calcium exchanger 1 (SLC8A1) of Homo sapiens (Human).